The primary structure comprises 651 residues: Beta-glucuronidase (651 aa).

Positions 1 to 22 are cleaved as a signal peptide; that stretch reads MARGSAVAWAALGPLLWGCALG. N-linked (GlcNAc...) asparagine glycosylation is found at Asn173, Asn272, and Asn420. The Proton donor role is filled by Glu451. N-linked (GlcNAc...) asparagine glycosylation occurs at Asn631.

The protein belongs to the glycosyl hydrolase 2 family. In terms of assembly, homotetramer. N-linked glycosylated with 3 to 4 oligosaccharide chains.

The protein localises to the lysosome. It carries out the reaction a beta-D-glucuronoside + H2O = D-glucuronate + an alcohol. Inhibited by L-aspartic acid. Plays an important role in the degradation of dermatan and keratan sulfates. In Homo sapiens (Human), this protein is Beta-glucuronidase (GUSB).